The primary structure comprises 972 residues: C-1-tetrahydrofolate synthase, mitochondrial (972 aa).

The transit peptide at 1–55 (MNVMVSFNQLRNYFLESNSLRPSKWLFQSYGTSSSANILNGKLLARKLQRSVAEE) directs the protein to the mitochondrion. Positions 56–340 (VQALKAKDRN…DLNPLELKKP (285 aa)) are methylenetetrahydrofolate dehydrogenase and cyclohydrolase. Residues 84–88 (YVRMK) and 131–133 (VQL) each bind substrate. NADP(+)-binding positions include 202–204 (GRS) and serine 227. 299 to 303 (PGGVG) lines the substrate pocket. The segment at 341–972 (VPSDIEIANS…CENGEIVGLS (632 aa)) is formyltetrahydrofolate synthetase. An ATP-binding site is contributed by 405–412 (TPFGEGKS).

In the N-terminal section; belongs to the tetrahydrofolate dehydrogenase/cyclohydrolase family. The protein in the C-terminal section; belongs to the formate--tetrahydrofolate ligase family. As to quaternary structure, homodimer.

The protein localises to the mitochondrion. It carries out the reaction (6R)-5,10-methylene-5,6,7,8-tetrahydrofolate + NADP(+) = (6R)-5,10-methenyltetrahydrofolate + NADPH. It catalyses the reaction (6R)-5,10-methenyltetrahydrofolate + H2O = (6R)-10-formyltetrahydrofolate + H(+). The catalysed reaction is (6S)-5,6,7,8-tetrahydrofolate + formate + ATP = (6R)-10-formyltetrahydrofolate + ADP + phosphate. It participates in one-carbon metabolism; tetrahydrofolate interconversion. In terms of biological role, mitochondrial isozyme of C-1-tetrahydrofolate synthase. The trifunctional enzyme catalyzes the interconversion of the one-carbon derivatives of tetrahydrofolate (THF) between different oxidation states by the enzymatic activities 10-formyltetrahydrofolate synthetase, 5,lO-methenyltetrahydrofolate cyclohydrolase, and 5,lO-methylenetetrahydrofolate dehydrogenase. In Schizosaccharomyces pombe (strain 972 / ATCC 24843) (Fission yeast), this protein is C-1-tetrahydrofolate synthase, mitochondrial (ade9).